The sequence spans 289 residues: 4-hydroxy-tetrahydrodipicolinate synthase (289 aa).

A pyruvate-binding site is contributed by T43. Y131 acts as the Proton donor/acceptor in catalysis. K160 acts as the Schiff-base intermediate with substrate in catalysis. Pyruvate is bound at residue V200.

Belongs to the DapA family. Homotetramer; dimer of dimers.

It is found in the cytoplasm. The enzyme catalyses L-aspartate 4-semialdehyde + pyruvate = (2S,4S)-4-hydroxy-2,3,4,5-tetrahydrodipicolinate + H2O + H(+). The protein operates within amino-acid biosynthesis; L-lysine biosynthesis via DAP pathway; (S)-tetrahydrodipicolinate from L-aspartate: step 3/4. Functionally, catalyzes the condensation of (S)-aspartate-beta-semialdehyde [(S)-ASA] and pyruvate to 4-hydroxy-tetrahydrodipicolinate (HTPA). The chain is 4-hydroxy-tetrahydrodipicolinate synthase from Methanococcus maripaludis (strain C5 / ATCC BAA-1333).